The primary structure comprises 303 residues: Quinolinate synthase (303 aa).

Positions 24 and 41 each coordinate iminosuccinate. Cysteine 86 provides a ligand contact to [4Fe-4S] cluster. Iminosuccinate is bound by residues 112-114 (YIN) and serine 129. Cysteine 172 lines the [4Fe-4S] cluster pocket. Iminosuccinate contacts are provided by residues 198 to 200 (HPE) and threonine 215. Residue cysteine 260 coordinates [4Fe-4S] cluster.

This sequence belongs to the quinolinate synthase family. Type 2 subfamily. It depends on [4Fe-4S] cluster as a cofactor.

The protein localises to the cytoplasm. The enzyme catalyses iminosuccinate + dihydroxyacetone phosphate = quinolinate + phosphate + 2 H2O + H(+). Its pathway is cofactor biosynthesis; NAD(+) biosynthesis; quinolinate from iminoaspartate: step 1/1. Functionally, catalyzes the condensation of iminoaspartate with dihydroxyacetone phosphate to form quinolinate. The sequence is that of Quinolinate synthase from Caldicellulosiruptor bescii (strain ATCC BAA-1888 / DSM 6725 / KCTC 15123 / Z-1320) (Anaerocellum thermophilum).